A 93-amino-acid chain; its full sequence is Small ribosomal subunit protein uS15 (93 aa).

The protein belongs to the universal ribosomal protein uS15 family. In terms of assembly, part of the 30S ribosomal subunit. Forms a bridge to the 50S subunit in the 70S ribosome, contacting the 23S rRNA.

Functionally, one of the primary rRNA binding proteins, it binds directly to 16S rRNA where it helps nucleate assembly of the platform of the 30S subunit by binding and bridging several RNA helices of the 16S rRNA. Forms an intersubunit bridge (bridge B4) with the 23S rRNA of the 50S subunit in the ribosome. The chain is Small ribosomal subunit protein uS15 from Ehrlichia ruminantium (strain Gardel).